Here is a 437-residue protein sequence, read N- to C-terminus: GTPase Era, mitochondrial (437 aa).

A mitochondrion-targeting transit peptide spans 1-20; the sequence is MAAPRRYCAGLVRALLGARQ. The 219-residue stretch at 112 to 330 folds into the Era-type G domain; it reads RVLRVVLLGA…QYLLTQAQPG (219 aa). The interval 120-127 is G1; it reads GAPNAGKS. 120–127 is a binding site for GTP; the sequence is GAPNAGKS. Residues 146-150 are G2; the sequence is HTTRC. A G3 region spans residues 167-170; that stretch reads DTPG. Residue 167 to 171 participates in GTP binding; the sequence is DTPGI. A Phosphoserine modification is found at Ser-173. 236–239 contributes to the GTP binding site; the sequence is NKVD. A G4 region spans residues 236–239; it reads NKVD. The segment at 270–292 is disordered; that stretch reads LRSRSSTHCPGPETEGPNAHSVR. The tract at residues 308 to 310 is G5; the sequence is LSA. Residues 360–437 form the KH type-2 domain; that stretch reads LPEEVPYGVQ…LIRLSVKLLK (78 aa).

The protein belongs to the TRAFAC class TrmE-Era-EngA-EngB-Septin-like GTPase superfamily. Era GTPase family.

Its subcellular location is the mitochondrion matrix. The protein resides in the mitochondrion inner membrane. Its function is as follows. Probable GTPase that plays a role in the mitochondrial ribosomal small subunit assembly. Specifically binds the 12S mitochondrial rRNA (12S mt-rRNA) to a 33 nucleotide section delineating the 3' terminal stem-loop region. May act as a chaperone that protects the 12S mt-rRNA on the 28S mitoribosomal subunit during ribosomal small subunit assembly. This is GTPase Era, mitochondrial (Eral1) from Mus musculus (Mouse).